A 328-amino-acid chain; its full sequence is L-lactate dehydrogenase (328 aa).

NAD(+) contacts are provided by residues Val-18, Glu-39, Lys-46, Tyr-71, and Gly-85 to Ala-86. Residues Gln-88 and Arg-94 each contribute to the substrate site. NAD(+) contacts are provided by residues Ser-107, Ala-124–Asn-126, and Ser-149. A substrate-binding site is contributed by Asn-126–Asp-129. Asp-154 to Arg-157 serves as a coordination point for substrate. Beta-D-fructose 1,6-bisphosphate is bound by residues Arg-159 and His-174. The active-site Proton acceptor is His-181. Tyr-226 bears the Phosphotyrosine mark. Thr-235 provides a ligand contact to substrate.

The protein belongs to the LDH/MDH superfamily. LDH family. In terms of assembly, homotetramer.

It localises to the cytoplasm. The catalysed reaction is (S)-lactate + NAD(+) = pyruvate + NADH + H(+). It participates in fermentation; pyruvate fermentation to lactate; (S)-lactate from pyruvate: step 1/1. Allosterically activated by fructose 1,6-bisphosphate (FBP). Its function is as follows. Catalyzes the conversion of lactate to pyruvate. This chain is L-lactate dehydrogenase, found in Streptococcus gordonii (strain Challis / ATCC 35105 / BCRC 15272 / CH1 / DL1 / V288).